The following is a 339-amino-acid chain: Probable geranylgeranyl transferase type-2 subunit beta (339 aa).

PFTB repeat units follow at residues 24 to 65, 72 to 113, 120 to 161, 168 to 209, 216 to 257, and 264 to 306; these read IDKH…YLLK, KNEV…IQYD, INSV…SLLK, CEKA…SILN, IDKL…SAID, and NDKL…SLMG. Residues 194–196 and 236–248 each bind geranylgeranyl diphosphate; these read HAG and RPEK…YSWW. 3 residues coordinate Zn(2+): Asp242, Cys244, and His294.

This sequence belongs to the protein prenyltransferase subunit beta family. In terms of assembly, heterodimer of an alpha and a beta subunit. The cofactor is Zn(2+).

The catalysed reaction is geranylgeranyl diphosphate + L-cysteinyl-[protein] = S-geranylgeranyl-L-cysteinyl-[protein] + diphosphate. In terms of biological role, catalyzes the transfer of a geranyl-geranyl moiety from geranyl-geranyl pyrophosphate to both cysteines in Rab proteins with an -XXCC, -XCXC and -CCXX C-terminal. The sequence is that of Probable geranylgeranyl transferase type-2 subunit beta (rabggtb) from Dictyostelium discoideum (Social amoeba).